Reading from the N-terminus, the 187-residue chain is Protein SCM4 (187 aa).

3 helical membrane-spanning segments follow: residues 11–31 (IAVS…VISI), 45–65 (VLCT…GAFG), and 80–100 (LLCG…VSLF). Positions 114 to 134 (DLEKQKDEKLPQHHPEVKDGE) are enriched in basic and acidic residues. The tract at residues 114 to 135 (DLEKQKDEKLPQHHPEVKDGEA) is disordered. Residues 162-182 (MSLHMSIVTGITIFTFGKCIL) traverse the membrane as a helical segment.

This sequence belongs to the ATG33 family.

Its subcellular location is the membrane. The sequence is that of Protein SCM4 (SCM4) from Saccharomyces cerevisiae (strain ATCC 204508 / S288c) (Baker's yeast).